The following is a 171-amino-acid chain: Co-chaperone protein HscB (171 aa).

A J domain is found at 2-74 (DYFTLFGLPA…LMRAEYLLSL (73 aa)).

It belongs to the HscB family. In terms of assembly, interacts with HscA and stimulates its ATPase activity. Interacts with IscU.

Its function is as follows. Co-chaperone involved in the maturation of iron-sulfur cluster-containing proteins. Seems to help targeting proteins to be folded toward HscA. The protein is Co-chaperone protein HscB of Escherichia coli (strain SE11).